A 557-amino-acid polypeptide reads, in one-letter code: Pre-mRNA-processing protein 45 (557 aa).

Disordered regions lie at residues methionine 1–alanine 32, glutamate 208–alanine 243, and methionine 316–aspartate 444. The span at aspartate 16–valine 25 shows a compositional bias: acidic residues. Over residues arginine 224–histidine 235 the composition is skewed to pro residues. A phosphoserine mark is found at serine 228 and serine 236. A compositionally biased stretch (basic and acidic residues) spans methionine 316 to arginine 327. At serine 376 the chain carries Phosphoserine. Positions glutamate 386–glutamate 430 are enriched in basic and acidic residues.

This sequence belongs to the SNW family. As to quaternary structure, homodimer. Interacts with cyp1 and the small 23 kDa subunit of the splicing factor U2AF (u2af23). Belongs to the 40S cdc5-associated complex (or cwf complex), a spliceosome sub-complex reminiscent of a late-stage spliceosome composed of the U2, U5 and U6 snRNAs and at least brr2, cdc5, cwf2/prp3, cwf3/syf1, cwf4/syf3, cwf5/ecm2, spp42/cwf6, cwf7/spf27, cwf8, cwf9, cwf10, cwf11, cwf12, prp45/cwf13, cwf14, cwf15, cwf16, cwf17, cwf18, cwf19, cwf20, cwf21, cwf22, cwf23, cwf24, cwf25, cwf26, cyp7/cwf27, cwf28, cwf29/ist3, lea1, msl1, prp5/cwf1, prp10, prp12/sap130, prp17, prp22, sap61, sap62, sap114, sap145, slu7, smb1, smd1, smd3, smf1, smg1 and syf2.

It localises to the nucleus. Involved in pre-mRNA splicing. This Schizosaccharomyces pombe (strain 972 / ATCC 24843) (Fission yeast) protein is Pre-mRNA-processing protein 45 (prp45).